The chain runs to 123 residues: Late histone H2B.L1 (123 aa).

Residues 1-10 (MPAKAQPAGK) show a composition bias toward low complexity. The tract at residues 1–33 (MPAKAQPAGKKGSKKAKAPRPSGGKKRRRRRKE) is disordered. Basic residues predominate over residues 11-32 (KGSKKAKAPRPSGGKKRRRRRK). The O-linked (GlcNAc) serine glycan is linked to Ser110. A Glycyl lysine isopeptide (Lys-Gly) (interchain with G-Cter in ubiquitin) cross-link involves residue Lys118.

Belongs to the histone H2B family. As to quaternary structure, the nucleosome is a histone octamer containing two molecules each of H2A, H2B, H3 and H4 assembled in one H3-H4 heterotetramer and two H2A-H2B heterodimers. The octamer wraps approximately 147 bp of DNA. Monoubiquitination of Lys-118 gives a specific tag for epigenetic transcriptional activation and is also prerequisite for histone H3 'Lys-4' and 'Lys-79' methylation. Post-translationally, glcNAcylation at Ser-110 promotes monoubiquitination of Lys-118. It fluctuates in response to extracellular glucose, and associates with transcribed genes.

The protein resides in the nucleus. It localises to the chromosome. Core component of nucleosome. Nucleosomes wrap and compact DNA into chromatin, limiting DNA accessibility to the cellular machineries which require DNA as a template. Histones thereby play a central role in transcription regulation, DNA repair, DNA replication and chromosomal stability. DNA accessibility is regulated via a complex set of post-translational modifications of histones, also called histone code, and nucleosome remodeling. The protein is Late histone H2B.L1 of Strongylocentrotus purpuratus (Purple sea urchin).